Here is a 172-residue protein sequence, read N- to C-terminus: EPIDERMAL PATTERNING FACTOR-like protein 7 (172 aa).

The signal sequence occupies residues 1–27 (MDHVNPTLFHLKSLSIFTLTLLYISSP). Intrachain disulfides connect Cys128/Cys159, Cys132/Cys138, Cys135/Cys161, and Cys147/Cys153.

This sequence belongs to the plant cysteine rich small secretory peptide family. Epidermal patterning factor subfamily.

The protein resides in the secreted. Controls stomatal patterning. This is EPIDERMAL PATTERNING FACTOR-like protein 7 from Arabidopsis thaliana (Mouse-ear cress).